Reading from the N-terminus, the 393-residue chain is Probable acetyl-CoA acyltransferase (393 aa).

C88 serves as the catalytic Acyl-thioester intermediate. Residues H349 and C378 each act as proton acceptor in the active site.

The protein belongs to the thiolase-like superfamily. Thiolase family.

It is found in the cytoplasm. It carries out the reaction 2 acetyl-CoA = acetoacetyl-CoA + CoA. The sequence is that of Probable acetyl-CoA acyltransferase from Staphylococcus aureus (strain Mu50 / ATCC 700699).